The sequence spans 138 residues: Ribosome-binding factor A (138 aa).

The interval 117–138 is disordered; the sequence is AEDGQHQEGPASADAKPESTEE.

It belongs to the RbfA family. As to quaternary structure, monomer. Binds 30S ribosomal subunits, but not 50S ribosomal subunits or 70S ribosomes.

Its subcellular location is the cytoplasm. In terms of biological role, one of several proteins that assist in the late maturation steps of the functional core of the 30S ribosomal subunit. Associates with free 30S ribosomal subunits (but not with 30S subunits that are part of 70S ribosomes or polysomes). Required for efficient processing of 16S rRNA. May interact with the 5'-terminal helix region of 16S rRNA. The polypeptide is Ribosome-binding factor A (Pseudomonas syringae pv. syringae (strain B728a)).